We begin with the raw amino-acid sequence, 236 residues long: Thiamine-phosphate synthase (236 aa).

4-amino-2-methyl-5-(diphosphooxymethyl)pyrimidine is bound by residues 57 to 61 (QLRDK) and asparagine 89. The Mg(2+) site is built by aspartate 90 and aspartate 109. 4-amino-2-methyl-5-(diphosphooxymethyl)pyrimidine is bound at residue serine 128. 2-[(2R,5Z)-2-carboxy-4-methylthiazol-5(2H)-ylidene]ethyl phosphate is bound at residue 154-156 (TPS). Residue lysine 157 participates in 4-amino-2-methyl-5-(diphosphooxymethyl)pyrimidine binding. 2-[(2R,5Z)-2-carboxy-4-methylthiazol-5(2H)-ylidene]ethyl phosphate contacts are provided by residues glycine 185 and 205–206 (IS).

The protein belongs to the thiamine-phosphate synthase family. Mg(2+) is required as a cofactor.

It catalyses the reaction 2-[(2R,5Z)-2-carboxy-4-methylthiazol-5(2H)-ylidene]ethyl phosphate + 4-amino-2-methyl-5-(diphosphooxymethyl)pyrimidine + 2 H(+) = thiamine phosphate + CO2 + diphosphate. The enzyme catalyses 2-(2-carboxy-4-methylthiazol-5-yl)ethyl phosphate + 4-amino-2-methyl-5-(diphosphooxymethyl)pyrimidine + 2 H(+) = thiamine phosphate + CO2 + diphosphate. It carries out the reaction 4-methyl-5-(2-phosphooxyethyl)-thiazole + 4-amino-2-methyl-5-(diphosphooxymethyl)pyrimidine + H(+) = thiamine phosphate + diphosphate. Its pathway is cofactor biosynthesis; thiamine diphosphate biosynthesis; thiamine phosphate from 4-amino-2-methyl-5-diphosphomethylpyrimidine and 4-methyl-5-(2-phosphoethyl)-thiazole: step 1/1. Its function is as follows. Condenses 4-methyl-5-(beta-hydroxyethyl)thiazole monophosphate (THZ-P) and 2-methyl-4-amino-5-hydroxymethyl pyrimidine pyrophosphate (HMP-PP) to form thiamine monophosphate (TMP). The protein is Thiamine-phosphate synthase of Roseiflexus sp. (strain RS-1).